A 96-amino-acid polypeptide reads, in one-letter code: Aspartyl/glutamyl-tRNA(Asn/Gln) amidotransferase subunit C (96 aa).

It belongs to the GatC family. Heterotrimer of A, B and C subunits.

The catalysed reaction is L-glutamyl-tRNA(Gln) + L-glutamine + ATP + H2O = L-glutaminyl-tRNA(Gln) + L-glutamate + ADP + phosphate + H(+). It catalyses the reaction L-aspartyl-tRNA(Asn) + L-glutamine + ATP + H2O = L-asparaginyl-tRNA(Asn) + L-glutamate + ADP + phosphate + 2 H(+). Its function is as follows. Allows the formation of correctly charged Asn-tRNA(Asn) or Gln-tRNA(Gln) through the transamidation of misacylated Asp-tRNA(Asn) or Glu-tRNA(Gln) in organisms which lack either or both of asparaginyl-tRNA or glutaminyl-tRNA synthetases. The reaction takes place in the presence of glutamine and ATP through an activated phospho-Asp-tRNA(Asn) or phospho-Glu-tRNA(Gln). In Symbiobacterium thermophilum (strain DSM 24528 / JCM 14929 / IAM 14863 / T), this protein is Aspartyl/glutamyl-tRNA(Asn/Gln) amidotransferase subunit C.